The primary structure comprises 1059 residues: Protein OPAQUE10 (1059 aa).

Tandem repeats lie at residues 269 to 342, 343 to 416, 417 to 490, 491 to 564, 565 to 638, 639 to 712, and 713 to 786. Residues 269–786 form a 7 X approximate repeats region; it reads SLLEPEDSVN…SRPIHDKESC (518 aa). Residues 511-534 form a disordered region; it reads FNDAPNKESEGYGESGRGKHGEKS. A compositionally biased stretch (basic and acidic residues) spans 515-534; it reads PNKESEGYGESGRGKHGEKS. 3 disordered regions span residues 732-756, 856-875, and 889-998; these read QYSD…EEKS, ETLA…DTGT, and SVCS…SGKG. Residues 858 to 869 are compositionally biased toward basic and acidic residues; sequence LADHPKKEEAGL. 2 stretches are compositionally biased toward polar residues: residues 907 to 924 and 945 to 958; these read DFSS…NTGG and ASDS…PEAS. Positions 984–994 are enriched in basic and acidic residues; it reads TRGRPEGDAPR. Residues 1003 to 1023 form a helical membrane-spanning segment; it reads VAGGITLVGAVFFMFHLSAAL.

In terms of assembly, homodimer. Interacts (via N-terminus) with FL1 (via C-terminus), HIP, 19 kDa alpha-zein (AC P06677), 22 kDa alpha-zein (AC O48966), 16 kDa gamma-zein (AC P08031) and 50 kDa gamma-zein (AC C0P381). Expressed in kernels.

Its subcellular location is the endoplasmic reticulum membrane. In terms of biological role, cereal endosperm protein required for the ring-shaped distribution of 22 kDa alpha- and 16 kDa gamma-zeins in protein bodies. This Zea mays (Maize) protein is Protein OPAQUE10.